The chain runs to 251 residues: Intermembrane phospholipid transport system lipoprotein MlaA (251 aa).

Positions 1–17 (MKLRLSALALGTTLLVG) are cleaved as a signal peptide. Residue cysteine 18 is the site of N-palmitoyl cysteine attachment. The S-diacylglycerol cysteine moiety is linked to residue cysteine 18. The tract at residues 228–251 (GELKPQENPNAQAIQDDLKDIDSE) is disordered.

The protein belongs to the MlaA family.

Its subcellular location is the cell outer membrane. In terms of biological role, involved in a phospholipid transport pathway that maintains lipid asymmetry in the outer membrane by retrograde trafficking of phospholipids from the outer membrane to the inner membrane. Required for intercellular spreading of S.flexneri. This chain is Intermembrane phospholipid transport system lipoprotein MlaA, found in Shigella flexneri.